Consider the following 264-residue polypeptide: Small ribosomal subunit protein eS1B (264 aa).

Positions 233–264 (GEGGGSGKPAADETGAKVERADGYEPPVQESV) are disordered. Basic and acidic residues predominate over residues 242–255 (AADETGAKVERADG).

This sequence belongs to the eukaryotic ribosomal protein eS1 family. In terms of assembly, component of the small ribosomal subunit. Mature ribosomes consist of a small (40S) and a large (60S) subunit. The 40S subunit contains about 33 different proteins and 1 molecule of RNA (18S). The 60S subunit contains about 49 different proteins and 3 molecules of RNA (28S, 5.8S and 5S). Part of the small subunit (SSU) processome, composed of more than 70 proteins and the RNA chaperone small nucleolar RNA (snoRNA) U3.

It localises to the cytoplasm. The protein resides in the nucleus. The protein localises to the nucleolus. In terms of biological role, component of the small ribosomal subunit. The ribosome is a large ribonucleoprotein complex responsible for the synthesis of proteins in the cell. Part of the small subunit (SSU) processome, first precursor of the small eukaryotic ribosomal subunit. During the assembly of the SSU processome in the nucleolus, many ribosome biogenesis factors, an RNA chaperone and ribosomal proteins associate with the nascent pre-rRNA and work in concert to generate RNA folding, modifications, rearrangements and cleavage as well as targeted degradation of pre-ribosomal RNA by the RNA exosome. May play a role during erythropoiesis. The protein is Small ribosomal subunit protein eS1B (rps3a-b) of Xenopus laevis (African clawed frog).